We begin with the raw amino-acid sequence, 130 residues long: Small ribosomal subunit protein uS8 (130 aa).

This sequence belongs to the universal ribosomal protein uS8 family. As to quaternary structure, part of the 30S ribosomal subunit.

One of the primary rRNA binding proteins, it binds directly to 16S rRNA central domain where it helps coordinate assembly of the platform of the 30S subunit. The polypeptide is Small ribosomal subunit protein uS8 (Methanothermobacter thermautotrophicus (strain ATCC 29096 / DSM 1053 / JCM 10044 / NBRC 100330 / Delta H) (Methanobacterium thermoautotrophicum)).